The sequence spans 614 residues: MNREVVTMSTGNTLPPALAALASPLNDAQLNQLQQTVTQLNAQQLAWVSGYFWGLSQSNALSVPHISAGQTASAASGKLTIIFASQTGNAKGVAQALLKEAQAAGIQAQLFDASDYKGKDLAKETHVIFVASTNGEGEAPDNALALHEFLKSKKAPKLPNLKYGVLGLGDSSYQFFCQTGKDFDQFLENLGAQRLVERLDADVDYQAAATEWRKQVLSILKDELTGAAAVTSVATFAVSQTAESHYSKEQPYTASLSTSQKITGRDSGKDVRHIEIDLADSGITYQPGDALGVWYENRPQLVNALLDSVGLSGHEEVQVDGETLSLHSALTHHYEITAANPQLVAQFAELAQSEKLTSLAQDKEALREYATRTQVIDVLREEKVTLSAIQLLSLLRRLTPRLYSIASSQSEVGEEVHLTVGVVEYEYKGEQRLGGASSFLAHQLEEGAPVKVFVEHNNNFKLPSDDNAPLIMVGPGTGIAPFRSFIQERENRGAAGKNWLLFGDRTFTQDFLYQVEWQKYLKSGVLNRLDVAFSRDQHEKVYVQHRLLDQAELVWQWLQEGAYFYVCGDASRMAKDVHQALITVVEQQGGLNREQAEEYVSELRKAKRYQRDVY.

One can recognise a Flavodoxin-like domain in the interval 79 to 217 (LTIIFASQTG…AATEWRKQVL (139 aa)). FMN contacts are provided by residues 85-90 (SQTGNA), 132-135 (STNG), and 168-177 (LGDSSYQFFC). Residues 249-463 (EQPYTASLST…VEHNNNFKLP (215 aa)) form the FAD-binding FR-type domain. FAD contacts are provided by residues T337, T371, 401-404 (RLYS), 419-421 (TVG), Y425, and 434-437 (GGAS). NADP(+)-binding positions include 534 to 535 (SR), 540 to 544 (KVYVQ), and D576. Y614 provides a ligand contact to FAD.

It belongs to the NADPH-dependent sulphite reductase flavoprotein subunit CysJ family. This sequence in the N-terminal section; belongs to the flavodoxin family. The protein in the C-terminal section; belongs to the flavoprotein pyridine nucleotide cytochrome reductase family. Alpha(8)-beta(8). The alpha component is a flavoprotein, the beta component is a hemoprotein. FAD is required as a cofactor. The cofactor is FMN.

The catalysed reaction is hydrogen sulfide + 3 NADP(+) + 3 H2O = sulfite + 3 NADPH + 4 H(+). The protein operates within sulfur metabolism; hydrogen sulfide biosynthesis; hydrogen sulfide from sulfite (NADPH route): step 1/1. In terms of biological role, component of the sulfite reductase complex that catalyzes the 6-electron reduction of sulfite to sulfide. This is one of several activities required for the biosynthesis of L-cysteine from sulfate. The flavoprotein component catalyzes the electron flow from NADPH -&gt; FAD -&gt; FMN to the hemoprotein component. The protein is Sulfite reductase [NADPH] flavoprotein alpha-component of Vibrio cholerae serotype O1 (strain ATCC 39541 / Classical Ogawa 395 / O395).